The chain runs to 400 residues: Glutamyl-tRNA reductase (400 aa).

Substrate-binding positions include T45–R48, S103, E108–Q110, and Q114. Residue C46 is the Nucleophile of the active site. G179 to G184 is an NADP(+) binding site.

This sequence belongs to the glutamyl-tRNA reductase family. In terms of assembly, homodimer.

It carries out the reaction (S)-4-amino-5-oxopentanoate + tRNA(Glu) + NADP(+) = L-glutamyl-tRNA(Glu) + NADPH + H(+). It functions in the pathway porphyrin-containing compound metabolism; protoporphyrin-IX biosynthesis; 5-aminolevulinate from L-glutamyl-tRNA(Glu): step 1/2. In terms of biological role, catalyzes the NADPH-dependent reduction of glutamyl-tRNA(Glu) to glutamate 1-semialdehyde (GSA). This is Glutamyl-tRNA reductase from Clostridium perfringens (strain SM101 / Type A).